Reading from the N-terminus, the 410-residue chain is Peptidase T (410 aa).

Histidine 78 lines the Zn(2+) pocket. Aspartate 80 is an active-site residue. Aspartate 140 is a Zn(2+) binding site. Residue glutamate 173 is the Proton acceptor of the active site. Glutamate 174, aspartate 196, and histidine 379 together coordinate Zn(2+).

It belongs to the peptidase M20B family. It depends on Zn(2+) as a cofactor.

The protein resides in the cytoplasm. The enzyme catalyses Release of the N-terminal residue from a tripeptide.. Its function is as follows. Cleaves the N-terminal amino acid of tripeptides. This is Peptidase T from Pectobacterium atrosepticum (strain SCRI 1043 / ATCC BAA-672) (Erwinia carotovora subsp. atroseptica).